The following is a 145-amino-acid chain: Angiogenin (145 aa).

The N-terminal stretch at 1–24 is a signal peptide; that stretch reads MAISPGPLFLIFVLGLVVIPPTLA. Glutamine 25 carries the post-translational modification Pyrrolidone carboxylic acid. Histidine 37 acts as the Proton acceptor in catalysis. Residues arginine 45 and aspartate 46 each coordinate tRNA. Intrachain disulfides connect cysteine 50/cysteine 104, cysteine 63/cysteine 115, and cysteine 81/cysteine 130. The Nucleolar localization signal signature appears at 55–59; the sequence is KRRSL. TRNA-binding residues include cysteine 104 and valine 126. The active-site Proton donor is the histidine 137.

The protein belongs to the pancreatic ribonuclease family. As to quaternary structure, homodimer. Interacts with RNH1; inhibiting ANG ribonuclease activity. Interacts with PCNA.

It localises to the secreted. Its subcellular location is the nucleus. The protein localises to the nucleolus. It is found in the cytoplasm. The protein resides in the stress granule. Has weak tRNA ribonuclease activity by itself due to partial autoinhibition by its C-terminus (residues 139-145), which folds into a short alpha-helix that partially occludes the substrate-binding site. In absence of stress, the ribonuclease activity is inhibited by RNH1 in the cytoplasm. In response to stress, dissociates from RNH1 in the cytoplasm and associates with cytoplasmic ribosomes with vacant A-sites: ribosomes directly activate the tRNA ribonuclease activity of ANG by refolding the C-terminal alpha-helix. In response to stress, the angiogenic activity of ANG is inhibited by RNH1 in the nucleus. Functionally, secreted ribonuclease that can either promote or restrict cell proliferation of target cells, depending on the context. Endocytosed in target cells via its receptor PLXNB2 and translocates to the cytoplasm or nucleus. Under stress conditions, localizes to the cytoplasm and promotes the assembly of stress granules (SGs): specifically cleaves a subset of tRNAs within anticodon loops to produce tRNA-derived stress-induced fragments (tiRNAs), resulting in translation repression and inhibition of cell proliferation. tiRNas also prevent formation of apoptosome, thereby promoting cell survival. Preferentially cleaves RNAs between a pyrimidine and an adenosine residue, suggesting that it cleaves the anticodon loop of tRNA(Ala) (32-UUAGCAU-38) after positions 33 and 36. Cleaves a subset of tRNAs, including tRNA(Ala), tRNA(Glu), tRNA(Gly), tRNA(Lys), tRNA(Val), tRNA(His), tRNA(Asp) and tRNA(Sec). Under growth conditions and in differentiated cells, translocates to the nucleus and stimulates ribosomal RNA (rRNA) transcription, including that containing the initiation site sequences of 45S rRNA, thereby promoting cell growth and proliferation. Angiogenin induces vascularization of normal and malignant tissues via its ability to promote rRNA transcription. Involved in hematopoietic stem and progenitor cell (HSPC) growth and survival by promoting rRNA transcription in growth conditions and inhibiting translation in response to stress, respectively. Mediates the crosstalk between myeloid and intestinal epithelial cells to protect the intestinal epithelial barrier integrity: secreted by myeloid cells and promotes intestinal epithelial cells proliferation and survival. Also mediates osteoclast-endothelial cell crosstalk in growing bone: produced by osteoclasts and protects the neighboring vascular cells against senescence by promoting rRNA transcription. This Mus musculus (Mouse) protein is Angiogenin.